Reading from the N-terminus, the 431-residue chain is Peptidase B (431 aa).

Lys-196 and Asp-201 together coordinate Mn(2+). The active site involves Lys-208. Mn(2+) contacts are provided by Asp-219, Asp-278, and Glu-280. Arg-282 is an active-site residue.

It belongs to the peptidase M17 family. As to quaternary structure, homohexamer. It depends on Mn(2+) as a cofactor.

The protein resides in the cytoplasm. The catalysed reaction is Release of an N-terminal amino acid, Xaa, from a peptide or arylamide. Xaa is preferably Glu or Asp but may be other amino acids, including Leu, Met, His, Cys and Gln.. In terms of biological role, probably plays an important role in intracellular peptide degradation. In Vibrio atlanticus (strain LGP32) (Vibrio splendidus (strain Mel32)), this protein is Peptidase B.